Reading from the N-terminus, the 310-residue chain is Ribosomal RNA large subunit methyltransferase F (310 aa).

It belongs to the methyltransferase superfamily. METTL16/RlmF family.

It localises to the cytoplasm. The catalysed reaction is adenosine(1618) in 23S rRNA + S-adenosyl-L-methionine = N(6)-methyladenosine(1618) in 23S rRNA + S-adenosyl-L-homocysteine + H(+). In terms of biological role, specifically methylates the adenine in position 1618 of 23S rRNA. This chain is Ribosomal RNA large subunit methyltransferase F, found in Pseudoalteromonas translucida (strain TAC 125).